Consider the following 160-residue polypeptide: Transcription elongation factor GreA (160 aa).

A coiled-coil region spans residues 14–38 (IKAELASLKKERPEVIKAIAEAREE).

This sequence belongs to the GreA/GreB family.

Functionally, necessary for efficient RNA polymerase transcription elongation past template-encoded arresting sites. The arresting sites in DNA have the property of trapping a certain fraction of elongating RNA polymerases that pass through, resulting in locked ternary complexes. Cleavage of the nascent transcript by cleavage factors such as GreA or GreB allows the resumption of elongation from the new 3'terminus. GreA releases sequences of 2 to 3 nucleotides. This Maridesulfovibrio salexigens (strain ATCC 14822 / DSM 2638 / NCIMB 8403 / VKM B-1763) (Desulfovibrio salexigens) protein is Transcription elongation factor GreA.